Consider the following 437-residue polypeptide: Attachment protein G3P (437 aa).

A signal peptide spans M1–A31. Residues S214–T347 are disordered. 2 stretches are compositionally biased toward low complexity: residues D218 to D235 and T252 to P265. A compositionally biased stretch (gly residues) spans G266–N319. The helical transmembrane segment at L415–L435 threads the bilayer.

Belongs to the inovirus G3P protein family. As to quaternary structure, interacts with G6P; this interaction is required for proper integration of G3P and G6P into the virion. Interacts with G8P. Interacts with the tip of the host pilus.

It is found in the virion. The protein resides in the host membrane. Functionally, plays essential roles both in the penetration of the viral genome into the bacterial host via pilus retraction and in the extrusion process. During the initial step of infection, G3P mediates adsorption of the phage to its primary receptor, the tip of host type IV PAK pilus. Attachment of the phage causes pilus retraction bringing the viral particle into close proximity of the host cell inner membrane. Subsequent interaction with a secondary host entry receptor induces penetration of the viral DNA into the host cytoplasm. In the extrusion process, G3P mediates the release of the membrane-anchored virion from the cell via its C-terminal domain. The protein is Attachment protein G3P (III) of Pseudomonas aeruginosa (Bacteriophage Pf1).